A 128-amino-acid chain; its full sequence is Large-conductance mechanosensitive channel (128 aa).

2 helical membrane passes run 11–31 and 70–90; these read FALK…AAFG and GAFI…FIFV.

The protein belongs to the MscL family. In terms of assembly, homopentamer.

It localises to the cell membrane. Channel that opens in response to stretch forces in the membrane lipid bilayer. May participate in the regulation of osmotic pressure changes within the cell. This chain is Large-conductance mechanosensitive channel, found in Listeria monocytogenes serotype 4a (strain HCC23).